The chain runs to 262 residues: Nurim (262 aa).

Residues 1-4 (MAPA) are Nuclear-facing. A helical membrane pass occupies residues 5–28 (LLLVPAALASFVLAFGTGVEFVRF). Over 29–58 (TSLRPLLGGIPESGGPDARHGWLAALQDRS) the chain is Perinuclear space. Residues 59–80 (ILASLAWDLCLLLLFVVQHSLM) traverse the membrane as a helical segment. Residues 81 to 97 (ATEAVKAWTSRYFGVLQ) are Nuclear-facing. Residues 98 to 114 (RSLYVACTALALQLVMR) traverse the membrane as a helical segment. The Perinuclear space segment spans residues 115-133 (YWEATPRGPVLWEARAEPW). A helical membrane pass occupies residues 134-164 (ATWVPLLCFVLHVVSWLLIFSILLVFDYAEL). Residues 165–191 (MGLKQVYYHVLGLGEPLSLKSPRALRL) lie on the Nuclear side of the membrane. Residues 192-210 (FSHLRHPVCVELLTVLWVV) traverse the membrane as a helical segment. Topologically, residues 211 to 216 (PTLGTD) are perinuclear space. A helical transmembrane segment spans residues 217 to 234 (RLLLALLFTLYLGLAHGL). Residues 235–262 (DQQDLRYLRSQLQRKLQLLSRPQDGEAE) are Nuclear-facing.

It belongs to the nurim family.

The protein localises to the nucleus inner membrane. In Rattus norvegicus (Rat), this protein is Nurim (Nrm).